A 157-amino-acid polypeptide reads, in one-letter code: Transcriptional repressor NrdR (157 aa).

A zinc finger lies at 3–34 (CPFCNTVDTKVIDSRLVSEGSQIKRRRQCAIC). In terms of domain architecture, ATP-cone spans 49-139 (PRVIKNDDLL…VYRSFEDVRE (91 aa)).

It belongs to the NrdR family. Zn(2+) is required as a cofactor.

Functionally, negatively regulates transcription of bacterial ribonucleotide reductase nrd genes and operons by binding to NrdR-boxes. The chain is Transcriptional repressor NrdR from Hamiltonella defensa subsp. Acyrthosiphon pisum (strain 5AT).